A 271-amino-acid polypeptide reads, in one-letter code: MSNTKEILEKYNIKLDTNKSQNYLIDDNKLNIILENADIQDNETILEIGAGIGTLTLPMAKKAKKVIAIEKDPIIVDILKQQIIKEKLTNIEIIKDDALKVDFPKFDKVVSNLPYQISSPVTFKLLEYPFKKAILMYQLEFAKRMQAKPDTHEYSRLSVALSYRADTKIIDTLPPEAFIPKPKIKSAVIELIPKNNKPIDKLLDNTIRALFQHRNKKAKKALIQSAHELGVDKKVLKQKLSNVTNDLFEEKVFKLTPTQIKEISLILEGNL.

6 residues coordinate S-adenosyl-L-methionine: N22, L24, G49, E70, D97, and N112.

The protein belongs to the class I-like SAM-binding methyltransferase superfamily. rRNA adenine N(6)-methyltransferase family. RsmA subfamily.

The protein resides in the cytoplasm. Specifically dimethylates two adjacent adenosines in the loop of a conserved hairpin near the 3'-end of 16S rRNA in the 30S particle. May play a critical role in biogenesis of 30S subunits. This Methanosphaera stadtmanae (strain ATCC 43021 / DSM 3091 / JCM 11832 / MCB-3) protein is Probable ribosomal RNA small subunit methyltransferase A.